The primary structure comprises 1212 residues: DNA-directed RNA polymerase subunit beta (1212 aa).

Basic and acidic residues predominate over residues 1176 to 1195; that stretch reads QQEKKKLAEEAAKKDDKSAE. The segment at 1176 to 1212 is disordered; sequence QQEKKKLAEEAAKKDDKSAEPVDQSDSSTSSDDKVSK.

This sequence belongs to the RNA polymerase beta chain family. As to quaternary structure, the RNAP catalytic core consists of 2 alpha, 1 beta, 1 beta' and 1 omega subunit. When a sigma factor is associated with the core the holoenzyme is formed, which can initiate transcription.

The enzyme catalyses RNA(n) + a ribonucleoside 5'-triphosphate = RNA(n+1) + diphosphate. In terms of biological role, DNA-dependent RNA polymerase catalyzes the transcription of DNA into RNA using the four ribonucleoside triphosphates as substrates. This is DNA-directed RNA polymerase subunit beta from Lactobacillus gasseri (strain ATCC 33323 / DSM 20243 / BCRC 14619 / CIP 102991 / JCM 1131 / KCTC 3163 / NCIMB 11718 / NCTC 13722 / AM63).